A 451-amino-acid polypeptide reads, in one-letter code: Adenylyltransferase and sulfurtransferase MOCS3 (451 aa).

Thr60 is subject to Phosphothreonine. Residues Gly99, Asp120, Ser127 to Arg131, Lys144, and Asp188 to Asn189 contribute to the ATP site. Residues Cys229 and Cys232 each contribute to the Zn(2+) site. Catalysis depends on Cys246, which acts as the Glycyl thioester intermediate; for adenylyltransferase activity. Cys304 and Cys307 together coordinate Zn(2+). One can recognise a Rhodanese domain in the interval Gln353–Pro449. The active-site Cysteine persulfide intermediate; for sulfurtransferase activity is Cys408.

The protein in the N-terminal section; belongs to the HesA/MoeB/ThiF family. UBA4 subfamily. Zn(2+) is required as a cofactor.

It is found in the cytoplasm. It localises to the cytosol. The catalysed reaction is [molybdopterin-synthase sulfur-carrier protein]-C-terminal Gly-Gly + ATP + H(+) = [molybdopterin-synthase sulfur-carrier protein]-C-terminal Gly-Gly-AMP + diphosphate. It catalyses the reaction [molybdopterin-synthase sulfur-carrier protein]-C-terminal Gly-Gly-AMP + S-sulfanyl-L-cysteinyl-[cysteine desulfurase] + AH2 = [molybdopterin-synthase sulfur-carrier protein]-C-terminal-Gly-aminoethanethioate + L-cysteinyl-[cysteine desulfurase] + A + AMP + 2 H(+). It participates in tRNA modification; 5-methoxycarbonylmethyl-2-thiouridine-tRNA biosynthesis. Its pathway is cofactor biosynthesis; molybdopterin biosynthesis. Functionally, plays a central role in 2-thiolation of mcm(5)S(2)U at tRNA wobble positions of cytosolic tRNA(Lys), tRNA(Glu) and tRNA(Gln). Also essential during biosynthesis of the molybdenum cofactor. Acts by mediating the C-terminal thiocarboxylation of sulfur carriers URM1 and MOCS2A. Its N-terminus first activates URM1 and MOCS2A as acyl-adenylates (-COAMP), then the persulfide sulfur on the catalytic cysteine is transferred to URM1 and MOCS2A to form thiocarboxylation (-COSH) of their C-terminus. The reaction probably involves hydrogen sulfide that is generated from the persulfide intermediate and that acts as a nucleophile towards URM1 and MOCS2A. Subsequently, a transient disulfide bond is formed. Does not use thiosulfate as sulfur donor; NFS1 probably acting as a sulfur donor for thiocarboxylation reactions. The protein is Adenylyltransferase and sulfurtransferase MOCS3 of Drosophila ananassae (Fruit fly).